Here is a 125-residue protein sequence, read N- to C-terminus: Small ribosomal subunit protein bS6 (125 aa).

The tract at residues 99–125 is disordered; sequence ASPMVKAREERKPLTEVENNDFEDAEE. Residues 104-113 show a composition bias toward basic and acidic residues; sequence KAREERKPLT. A compositionally biased stretch (acidic residues) spans 116 to 125; sequence ENNDFEDAEE.

This sequence belongs to the bacterial ribosomal protein bS6 family.

In terms of biological role, binds together with bS18 to 16S ribosomal RNA. The polypeptide is Small ribosomal subunit protein bS6 (Histophilus somni (strain 2336) (Haemophilus somnus)).